The sequence spans 601 residues: MEFKVIAEYFDKLEKISSRLQLTALLADLLSKSDKAIIDKVVYIIQGKLWPDFLGYPELGIGEKFLIKAISIATNTDENSVENLYKSIGDLGEVARRLKSKQQSTGILGFLGTSSKESLKVDEVYSTLSKVALTTGEGSRDLKIRLLAGLLKKADPLEAKFLVRFVEGRLRVGIGDATVLDAMAIAFGGGQSASEIVERAYNLRADLGNIAKIIVEKGIEALKTLKPEVGIPIRPMLAERLSNPEEILKKVGGSALVDYKYDGERAQIHKKDDKIFIFSRRLENITSQYPDVVEYISKYTEGKEFIIEGEIVAVDPESGEMRSFQELMHRKRKSDIYEAIKEYPVNVFLFDLMYYEDVDYTTKPLEVRRKLLESIVKPNDYVKIAHHIQVNNVEDLKSFFYRAISEGGEGVMVKAIGKDAIYQAGARGWLWIKLKRDYQSEMADTVDLVVVGGFYGKGKRGGKISSLLMAAYNPKTDTFESVCKVASGFSDEQLDELQKKLMEIKRDIKHPRVNSKMEPDIWVEPVYVAEIIGAEITISPLHTCCQDVVEKDAGLSIRFPRFIRWRDDKSPEDATTTDEILEMYNKQPKKKIESPPIDESV.

An ATP-binding site is contributed by Asp-258. The active-site N6-AMP-lysine intermediate is the Lys-260. Residues Arg-265, Arg-280, Glu-310, Phe-350, Arg-427, and Lys-433 each coordinate ATP. Positions Asp-568–Val-601 are disordered.

The protein belongs to the ATP-dependent DNA ligase family. It depends on Mg(2+) as a cofactor.

The enzyme catalyses ATP + (deoxyribonucleotide)n-3'-hydroxyl + 5'-phospho-(deoxyribonucleotide)m = (deoxyribonucleotide)n+m + AMP + diphosphate.. DNA ligase that seals nicks in double-stranded DNA during DNA replication, DNA recombination and DNA repair. The sequence is that of DNA ligase from Saccharolobus islandicus (strain L.S.2.15 / Lassen #1) (Sulfolobus islandicus).